A 48-amino-acid polypeptide reads, in one-letter code: Large ribosomal subunit protein eL40 (48 aa).

The protein belongs to the eukaryotic ribosomal protein eL40 family.

This is Large ribosomal subunit protein eL40 from Methanobrevibacter smithii (strain ATCC 35061 / DSM 861 / OCM 144 / PS).